Here is a 75-residue protein sequence, read N- to C-terminus: Small ribosomal subunit protein bS18 (75 aa).

The protein belongs to the bacterial ribosomal protein bS18 family. Part of the 30S ribosomal subunit. Forms a tight heterodimer with protein bS6.

Functionally, binds as a heterodimer with protein bS6 to the central domain of the 16S rRNA, where it helps stabilize the platform of the 30S subunit. The polypeptide is Small ribosomal subunit protein bS18 (Buchnera aphidicola subsp. Schizaphis graminum (strain Sg)).